The chain runs to 155 residues: Protein-export protein SecB (155 aa).

Belongs to the SecB family. Homotetramer, a dimer of dimers. One homotetramer interacts with 1 SecA dimer.

It is found in the cytoplasm. In terms of biological role, one of the proteins required for the normal export of preproteins out of the cell cytoplasm. It is a molecular chaperone that binds to a subset of precursor proteins, maintaining them in a translocation-competent state. It also specifically binds to its receptor SecA. The chain is Protein-export protein SecB from Shigella sonnei (strain Ss046).